Consider the following 100-residue polypeptide: Colipase-like protein 2 (100 aa).

The first 21 residues, 1-21 (MAAALALVAGVLSGAVLPLWS), serve as a signal peptide directing secretion. Disulfide bonds link Cys-34–Cys-45, Cys-40–Cys-56, Cys-44–Cys-78, Cys-66–Cys-86, and Cys-80–Cys-97.

It belongs to the colipase family.

The protein resides in the secreted. The chain is Colipase-like protein 2 (CLPSL2) from Homo sapiens (Human).